The following is a 131-amino-acid chain: UPF0146 protein PYRAB01940 (131 aa).

The protein belongs to the UPF0146 family.

The protein is UPF0146 protein PYRAB01940 of Pyrococcus abyssi (strain GE5 / Orsay).